A 613-amino-acid polypeptide reads, in one-letter code: Protein starmaker (613 aa).

The N-terminal stretch at 1–20 (MLSRTVFVPLILAFVGVSIS) is a signal peptide. The tract at residues 42 to 613 (FTVQFNVGTP…DGRKTSMPIS (572 aa)) is disordered. 5 stretches are compositionally biased toward basic and acidic residues: residues 62-72 (DGKDSAEKNEA), 117-132 (SAEK…DKPD), 147-193 (DASH…KPEG), 206-284 (SAEK…KSDD), and 291-449 (DEQK…HSDS). Acidic residues predominate over residues 450–465 (DSDSDSDSDSDSDSDS). Composition is skewed to basic and acidic residues over residues 467–482 (SNSR…SSES), 509–521 (DKDS…KTDS), and 538–554 (DDSK…TAEK). The segment covering 555-573 (TDEDSHDVSDDDDDIDAHD) has biased composition (acidic residues). Over residues 574 to 607 (DEAGVEHGTDEASKPHQEPDHHDDTTHGSDDGRK) the composition is skewed to basic and acidic residues.

The protein resides in the secreted. Essential for the formation of otoliths in the inner ear of developing larvae and for the perception of gravity and acceleration. May be one of the organic components of the ortholiths. The sequence is that of Protein starmaker (stm) from Danio rerio (Zebrafish).